The following is a 716-amino-acid chain: Mitochondrial Rho GTPase 1 (716 aa).

Topologically, residues 1–692 (MSPDAIRVVV…VSVDQDDIKH (692 aa)) are cytoplasmic. The region spanning 3–224 (PDAIRVVVCG…FYLCQRAVTH (222 aa)) is the Miro 1 domain. The interval 58–99 (NDQDHHHHHQSSPSTMKNKRKHNNKRERERERESSINNVQPN) is disordered. Residues 84–91 (ERERERES), 113–115 (DTS), and 167–170 (NKSD) each bind GTP. An EF-hand 1 domain is found at 240-275 (GAIKPLKRIFWLSDTDQDGYLNFEELSELHKKCFGI). Ca(2+) contacts are provided by aspartate 253, aspartate 255, aspartate 257, tyrosine 259, and glutamate 264. Residues 303–327 (TQTPPQQQHLATSAGTPNGTTTTTS) form a disordered region. The region spanning 388 to 423 (TGYKFFVDLFIKFDKDNDGGLNEDELNTLFRSTPGI) is the EF-hand 2 domain. Positions 401, 403, 405, and 412 each coordinate Ca(2+). Positions 505-671 (RNVFNCFIVG…FIQLVDAAKT (167 aa)) constitute a Miro 2 domain. GTP contacts are provided by residues 514–521 (GAPKAGKS), 550–554 (ELRGG), and 620–623 (LKAD). A helical; Anchor for type IV membrane protein membrane pass occupies residues 693 to 713 (IIMTGAAIAVVGLVSIWVLNS). Topologically, residues 714 to 716 (LRR) are mitochondrial intermembrane.

The protein belongs to the mitochondrial Rho GTPase family.

Its subcellular location is the mitochondrion outer membrane. In terms of biological role, mitochondrial GTPase involved in mitochondrial trafficking. Probably involved in control of anterograde transport of mitochondria and their subcellular distribution. This chain is Mitochondrial Rho GTPase 1 (GEM1), found in Candida albicans (strain SC5314 / ATCC MYA-2876) (Yeast).